A 515-amino-acid chain; its full sequence is ATP synthase subunit alpha (515 aa).

171–178 (GDRQTGKT) serves as a coordination point for ATP.

Belongs to the ATPase alpha/beta chains family. F-type ATPases have 2 components, CF(1) - the catalytic core - and CF(0) - the membrane proton channel. CF(1) has five subunits: alpha(3), beta(3), gamma(1), delta(1), epsilon(1). CF(0) has three main subunits: a(1), b(2) and c(9-12). The alpha and beta chains form an alternating ring which encloses part of the gamma chain. CF(1) is attached to CF(0) by a central stalk formed by the gamma and epsilon chains, while a peripheral stalk is formed by the delta and b chains.

It localises to the cell inner membrane. The enzyme catalyses ATP + H2O + 4 H(+)(in) = ADP + phosphate + 5 H(+)(out). Its function is as follows. Produces ATP from ADP in the presence of a proton gradient across the membrane. The alpha chain is a regulatory subunit. The polypeptide is ATP synthase subunit alpha (Xanthomonas axonopodis pv. citri (strain 306)).